The primary structure comprises 514 residues: MEISWGRAMWRNFLGQSPDWYKLALLVFLIINPFIFLANPFIAGWLLVAEFIFTLAMALKCYPLLPGGLLAIEAVIIGMTSAAHVREEVAANLEVLLLLMFMVAGIYFMKQLLLFIFTRLLLSIRSKMVLSLAFCVAAAFLSAFLDALTVVAVVISVAVGFYGIYHRVASSRGEENDMLDDSHIDPHYKTVLEQFRGFLRSLMMHAGVGTALGGVMTMVGEPQNLIIAKAAGWHFGDFFLRMSPVTVPVLVCGLLTCMLVEKMRWFGYGETLPEKVRDVLQQFDDQSRKKRTRQDKIKLIVQAVIGVWLVTALALHLAEVGLIGLSVIILATALTGVTDEHAIGKAFTESLPFTALLTVFFSIVAVIIDQHLFAPIIQFVLQASEHAQLTLFYLFNGLLSSISDNVFVGTIYINEAKAAMENGAISLKQFELLAVAINTGTNLPSVATPNGQAAFLFLLTSALAPLIRLSYGRMVWMALPYTIVLTLIGLLCVEFTLAPATEWMTQAGWLATLS.

12 helical membrane passes run 23–43 (LALL…PFIA), 63–83 (PLLP…TSAA), 97–117 (LLLM…LFIF), 120–140 (LLLS…AAAF), 144–164 (FLDA…FYGI), 202–222 (LMMH…VGEP), 238–258 (FFLR…LTCM), 303–323 (AVIG…VGLI), 357–377 (LTVF…APII), 391–411 (LFYL…VGTI), 447–467 (ATPN…APLI), and 475–495 (VWMA…CVEF).

It belongs to the NhaB Na(+)/H(+) (TC 2.A.34) antiporter family.

The protein localises to the cell inner membrane. It catalyses the reaction 2 Na(+)(in) + 3 H(+)(out) = 2 Na(+)(out) + 3 H(+)(in). In terms of biological role, na(+)/H(+) antiporter that extrudes sodium in exchange for external protons. This chain is Na(+)/H(+) antiporter NhaB, found in Salmonella newport (strain SL254).